A 315-amino-acid polypeptide reads, in one-letter code: Putative glycosyltransferase ORF315 (315 aa).

It belongs to the glycosyltransferase group 1 family. Glycosyltransferase 4 subfamily.

This is Putative glycosyltransferase ORF315 from Acidianus convivator (ABV).